The chain runs to 302 residues: 33 kDa chaperonin (302 aa).

Cystine bridges form between Cys247–Cys249 and Cys280–Cys283.

This sequence belongs to the HSP33 family. Post-translationally, under oxidizing conditions two disulfide bonds are formed involving the reactive cysteines. Under reducing conditions zinc is bound to the reactive cysteines and the protein is inactive.

Its subcellular location is the cytoplasm. Its function is as follows. Redox regulated molecular chaperone. Protects both thermally unfolding and oxidatively damaged proteins from irreversible aggregation. Plays an important role in the bacterial defense system toward oxidative stress. This is 33 kDa chaperonin from Prochlorococcus marinus (strain AS9601).